We begin with the raw amino-acid sequence, 471 residues long: Indole-3-acetate beta-glucosyltransferase (471 aa).

Histidine 15 functions as the Proton acceptor in the catalytic mechanism. Histidine 15 lines the an anthocyanidin pocket. Catalysis depends on aspartate 107, which acts as the Charge relay. Threonine 129, glutamine 344, histidine 359, tryptophan 362, asparagine 363, serine 364, glutamate 367, aspartate 383, and glutamine 384 together coordinate UDP-alpha-D-glucose.

This sequence belongs to the UDP-glycosyltransferase family.

The enzyme catalyses (indol-3-yl)acetate + UDP-alpha-D-glucose = 1-O-(indol-3-ylacetyl)-beta-D-glucose + UDP. Its pathway is plant hormone metabolism; auxin conjugation. This chain is Indole-3-acetate beta-glucosyltransferase (IAGLU), found in Zea mays (Maize).